Reading from the N-terminus, the 153-residue chain is 6,7-dimethyl-8-ribityllumazine synthase (153 aa).

5-amino-6-(D-ribitylamino)uracil contacts are provided by residues Phe23, 57–59 (AYE), and 81–83 (AVI). Position 86-87 (86-87 (AT)) interacts with (2S)-2-hydroxy-3-oxobutyl phosphate. The active-site Proton donor is His89. Residue Phe113 participates in 5-amino-6-(D-ribitylamino)uracil binding. Arg127 lines the (2S)-2-hydroxy-3-oxobutyl phosphate pocket.

Belongs to the DMRL synthase family.

It catalyses the reaction (2S)-2-hydroxy-3-oxobutyl phosphate + 5-amino-6-(D-ribitylamino)uracil = 6,7-dimethyl-8-(1-D-ribityl)lumazine + phosphate + 2 H2O + H(+). The protein operates within cofactor biosynthesis; riboflavin biosynthesis; riboflavin from 2-hydroxy-3-oxobutyl phosphate and 5-amino-6-(D-ribitylamino)uracil: step 1/2. Catalyzes the formation of 6,7-dimethyl-8-ribityllumazine by condensation of 5-amino-6-(D-ribitylamino)uracil with 3,4-dihydroxy-2-butanone 4-phosphate. This is the penultimate step in the biosynthesis of riboflavin. The sequence is that of 6,7-dimethyl-8-ribityllumazine synthase from Leptospira borgpetersenii serovar Hardjo-bovis (strain JB197).